Here is a 148-residue protein sequence, read N- to C-terminus: DNA-directed RNA polymerase II subunit GRINL1A, isoforms 4/5 (148 aa).

The tract at residues 1–66 (MATPARAPES…AEFGGAAGNV (66 aa)) is disordered. Residues 53-66 (GLGAAEFGGAAGNV) show a composition bias toward low complexity.

The protein is DNA-directed RNA polymerase II subunit GRINL1A, isoforms 4/5 (POLR2M) of Homo sapiens (Human).